A 118-amino-acid chain; its full sequence is uncharacterized protein (118 aa).

A run of 4 helical transmembrane segments spans residues 12–32 (IISL…FATF), 39–59 (LMPH…SLFI), 63–83 (IIGY…CPTI), and 98–118 (SAHL…VILF).

Its subcellular location is the cell membrane. This is an uncharacterized protein from Methanocaldococcus jannaschii (strain ATCC 43067 / DSM 2661 / JAL-1 / JCM 10045 / NBRC 100440) (Methanococcus jannaschii).